A 377-amino-acid polypeptide reads, in one-letter code: Leukocyte elastase inhibitor (377 aa).

Residue methionine 1 is modified to N-acetylmethionine. The residue at position 136 (lysine 136) is an N6-acetyllysine. Serine 298 carries the phosphoserine modification. Residues 349–377 (EFVADHPFIFFIRHKPSSNILFLGRLSSP) are CARD-binding motif (CBM).

It belongs to the serpin family. Ov-serpin subfamily. As to quaternary structure, monomer. Interacts (via C-terminus) with CASP1; CASP4 (via CARD domain) and CASP5; these interactions regulate the activity of inflammatory caspases. Interacts with PRTN3. Interacts with GZMH.

The protein localises to the secreted. It localises to the cytoplasm. It is found in the cytolytic granule. The protein resides in the early endosome. In terms of biological role, neutrophil serine protease inhibitor that plays an essential role in the regulation of the innate immune response, inflammation and cellular homeostasis. Acts primarily to protect the cell from proteases released in the cytoplasm during stress or infection. These proteases are important in killing microbes but when released from granules, these potent enzymes also destroy host proteins and contribute to mortality. Regulates the activity of the neutrophil proteases elastase, cathepsin G, proteinase-3, chymase, chymotrypsin, and kallikrein-3. Also acts as a potent intracellular inhibitor of GZMH by directly blocking its proteolytic activity. During inflammation, limits the activity of inflammatory caspases CASP1, CASP4 and CASP5 by suppressing their caspase-recruitment domain (CARD) oligomerization and enzymatic activation. When secreted, promotes the proliferation of beta-cells via its protease inhibitory function. The protein is Leukocyte elastase inhibitor (SERPINB1) of Bos taurus (Bovine).